The following is an 821-amino-acid chain: Calpain-3 (821 aa).

A disordered region spans residues 1-37; sequence MPTVISPTVAPRTGAEPRSPGPVPHPAQGKTTEAGGG. In terms of domain architecture, Calpain catalytic spans 74–417; that stretch reads LYLDPEFPPD…FTKLEICNLT (344 aa). Residues Cys-129, His-334, and Asn-358 contribute to the active site. The segment at 418 to 586 is domain III; the sequence is ADALESDKLQ…KRNLSEEAEN (169 aa). The linker stretch occupies residues 587 to 649; that stretch reads TISVDRPVKK…RPGHTDQESE (63 aa). A disordered region spans residues 603–651; that stretch reads IFVSDRANSNKELGVDQEAEEGKDKTGPDKQGESPQPRPGHTDQESEEQ. The segment covering 622-634 has biased composition (basic and acidic residues); it reads EEGKDKTGPDKQG. EF-hand domains follow at residues 649 to 683, 692 to 725, 722 to 757, and 787 to 821; these read EEQQQFRNIFRQIAGDDMEICADELKNVLNTVVNK, FTLESCRSMIALMDTDGSGRLNLQEFHHLWKKIK, KKIKAWQKIFKHYDTDHSGTINSYEMRNAVNDAGFH, and VRLEGMFRAFHAFDKDGDGIIKLNVLEWLQLTMYA. The interval 650–820 is domain IV; the sequence is EQQQFRNIFR…VLEWLQLTMY (171 aa). Ala-662, Asp-665, Glu-667, Glu-672, Asp-705, Asp-707, Ser-709, Arg-711, Glu-716, Asp-735, Asp-737, Ser-739, Thr-741, Glu-746, Asp-800, Asp-802, Asp-804, and Ile-806 together coordinate Ca(2+).

The protein belongs to the peptidase C2 family. In terms of assembly, homodimer; via EF-hand domain 4. Interacts with TTN/titin. Interacts with CMYA5; this interaction, which results in CMYA5 proteolysis, may protect CAPN3 from autolysis. Interacts with SIMC1. Interacts with UTP25; the interaction is required for CAPN3 translocation to the nucleolus. As to expression, skeletal muscle.

The protein resides in the cytoplasm. The protein localises to the nucleus. Its subcellular location is the nucleolus. The catalysed reaction is Broad endopeptidase activity.. Its activity is regulated as follows. Activated by micromolar concentrations of calcium and inhibited by calpastatin. Functionally, calcium-regulated non-lysosomal thiol-protease. Proteolytically cleaves CTBP1 at 'His-399'. Mediates, with UTP25, the proteasome-independent degradation of p53/TP53. The protein is Calpain-3 (Capn3) of Rattus norvegicus (Rat).